A 466-amino-acid polypeptide reads, in one-letter code: UDP-N-acetylmuramoylalanine--D-glutamate ligase (466 aa).

121-127 is an ATP binding site; sequence GTNGKST.

It belongs to the MurCDEF family.

It localises to the cytoplasm. It carries out the reaction UDP-N-acetyl-alpha-D-muramoyl-L-alanine + D-glutamate + ATP = UDP-N-acetyl-alpha-D-muramoyl-L-alanyl-D-glutamate + ADP + phosphate + H(+). It participates in cell wall biogenesis; peptidoglycan biosynthesis. In terms of biological role, cell wall formation. Catalyzes the addition of glutamate to the nucleotide precursor UDP-N-acetylmuramoyl-L-alanine (UMA). This is UDP-N-acetylmuramoylalanine--D-glutamate ligase from Mesorhizobium japonicum (strain LMG 29417 / CECT 9101 / MAFF 303099) (Mesorhizobium loti (strain MAFF 303099)).